Here is a 508-residue protein sequence, read N- to C-terminus: Photosystem II CP47 reaction center protein (508 aa).

Helical transmembrane passes span 21-36 (AVHI…WAGS), 101-115 (ILFS…IWHW), 140-156 (GIHL…FGAF), 203-218 (IAAG…FHLS), 237-252 (VLSS…AFVV), and 457-472 (SFAL…HGAR).

The protein belongs to the PsbB/PsbC family. PsbB subfamily. As to quaternary structure, PSII is composed of 1 copy each of membrane proteins PsbA, PsbB, PsbC, PsbD, PsbE, PsbF, PsbH, PsbI, PsbJ, PsbK, PsbL, PsbM, PsbT, PsbX, PsbY, PsbZ, Psb30/Ycf12, at least 3 peripheral proteins of the oxygen-evolving complex and a large number of cofactors. It forms dimeric complexes. Binds multiple chlorophylls. PSII binds additional chlorophylls, carotenoids and specific lipids. serves as cofactor.

It is found in the plastid. The protein resides in the chloroplast thylakoid membrane. One of the components of the core complex of photosystem II (PSII). It binds chlorophyll and helps catalyze the primary light-induced photochemical processes of PSII. PSII is a light-driven water:plastoquinone oxidoreductase, using light energy to abstract electrons from H(2)O, generating O(2) and a proton gradient subsequently used for ATP formation. This Oenothera argillicola (Appalachian evening primrose) protein is Photosystem II CP47 reaction center protein.